The primary structure comprises 123 residues: Immunoglobulin lambda variable 5-39 (123 aa).

The signal sequence occupies residues 1–19 (MAWTPLLLLLLSHCTGSLS). Residues 20-44 (QPVLTQPTSLSASPGASARFTCTLR) are framework-1. One can recognise an Ig-like domain in the interval 21-123 (PVLTQPTSLS…YCAIWYSSTS (103 aa)). A disulfide bond links cysteine 41 and cysteine 115. Residues 45–53 (SGINVGTYR) form a complementarity-determining-1 region. A framework-2 region spans residues 54 to 70 (IYWYQQKPGSLPRYLLR). The complementarity-determining-2 stretch occupies residues 71–77 (YKSDSDK). Residues 78–115 (QQGSGVPSRFSGSKDASTNAGLLLISGLQSEDEADYYC) form a framework-3 region. The complementarity-determining-3 stretch occupies residues 116–123 (AIWYSSTS).

As to quaternary structure, immunoglobulins are composed of two identical heavy chains and two identical light chains; disulfide-linked.

Its subcellular location is the secreted. It is found in the cell membrane. V region of the variable domain of immunoglobulin light chains that participates in the antigen recognition. Immunoglobulins, also known as antibodies, are membrane-bound or secreted glycoproteins produced by B lymphocytes. In the recognition phase of humoral immunity, the membrane-bound immunoglobulins serve as receptors which, upon binding of a specific antigen, trigger the clonal expansion and differentiation of B lymphocytes into immunoglobulins-secreting plasma cells. Secreted immunoglobulins mediate the effector phase of humoral immunity, which results in the elimination of bound antigens. The antigen binding site is formed by the variable domain of one heavy chain, together with that of its associated light chain. Thus, each immunoglobulin has two antigen binding sites with remarkable affinity for a particular antigen. The variable domains are assembled by a process called V-(D)-J rearrangement and can then be subjected to somatic hypermutations which, after exposure to antigen and selection, allow affinity maturation for a particular antigen. This is Immunoglobulin lambda variable 5-39 from Homo sapiens (Human).